The sequence spans 470 residues: Putative F-box/LRR-repeat protein At3g58920 (470 aa).

The F-box domain occupies 1 to 53 (MDRISNLPNEIICHIVSFLSAKEAAFASVLSKRWQNLFTIVQKLEFDDSVKNQ). LRR repeat units lie at residues 114-142 (KLEI…KLTS), 143-170 (CIFA…FLKS), 173-198 (FSDL…TIYD), 225-250 (FTYF…KYID), 287-312 (EDDP…HLST), and 342-367 (YECF…MIKG).

This Arabidopsis thaliana (Mouse-ear cress) protein is Putative F-box/LRR-repeat protein At3g58920.